A 182-amino-acid chain; its full sequence is MLQALLIFVLQIIYVPILTIRTILLVKNQTRSAAAVGLLEGAIYIVSLGIVFQDLSNWMNIVAYVIGFSAGLLLGGYIENKLAIGYITYQVSLLDRCNELVDELRHSGFGVTVFEGEGINSIRYRLDIVAKRSREKELLEIINEIAPKAFMSSYEIRSFKGGYLTKAMKKRALMKKKDHHAS.

3 helical membrane passes run 6–26 (LIFV…ILLV), 32–52 (SAAA…GIVF), and 58–78 (WMNI…GGYI).

The protein belongs to the UPF0316 family.

It is found in the cell membrane. The polypeptide is UPF0316 protein BCQ_3166 (Bacillus cereus (strain Q1)).